A 585-amino-acid polypeptide reads, in one-letter code: TVGVVTGLILSFANVSSLYEMSLLAFSGLLGGLLKDGKKLGARLGLVVGSLLIGLYAQADQGLTTNLYESLTAVVLFLLTPSFVLKNLSKLVPGTSENMLEQQQYVRKIRDVTANRVEQFSNVFQALSKSFTQNGFYDEKPSADKEVDYFLSSVTERTCQFCFKKEQCWAQQFDTTYEYMKEIMLEVDNGTLEQNPRLIREMDKHCVKSKKVIDVIEHELTYFKANQHLKAQIQESRRIVAEQLHGVSEVMGNFAKEIKRERENLNVQEEQILEALRNFGMEINQIEIYSLEPGNVDIEMWVPYCHGRGECEKIIAPMLTDILGESIVVKNEECAKYPQGYCHVSFGCTKAYVVDTGVAHAAKGGGFVSGDSYSMIELNAGKYALAISDGMGNGERAHYESSETLQLLKQILQTGIEETIAIKSINSILSLRTNDEIFSTLDLAMIDLQDANVNFLKIGSTPSFIKRGDKVIKIQASNLPMGIIEEFEVDVVNEQMKAEDLLIMMSDGVFEGPKHVENYEMWMKRKIGELQTNDPQEIADLIMEEVIRTKVGLIEDDMTVVVAKLQHNTPKWSSIPSYAYRNLAQ.

Helical transmembrane passes span 40 to 57 and 70 to 86; these read LGAR…GLYA and SLTA…FVLK. Residues 355–565 enclose the PPM-type phosphatase domain; the sequence is DTGVAHAAKG…DDMTVVVAKL (211 aa).

Its subcellular location is the cell membrane. The enzyme catalyses O-phospho-L-seryl-[protein] + H2O = L-seryl-[protein] + phosphate. It catalyses the reaction O-phospho-L-threonyl-[protein] + H2O = L-threonyl-[protein] + phosphate. In terms of biological role, normally needed for pro-sigma E processing during sporulation but can be bypassed in vegetative cells. Activates SpoIIAA by dephosphorylation. In Priestia megaterium (Bacillus megaterium), this protein is Stage II sporulation protein E (spoIIE).